We begin with the raw amino-acid sequence, 173 residues long: Translation initiation factor IF-3 (173 aa).

This sequence belongs to the IF-3 family. As to quaternary structure, monomer.

Its subcellular location is the cytoplasm. Its function is as follows. IF-3 binds to the 30S ribosomal subunit and shifts the equilibrium between 70S ribosomes and their 50S and 30S subunits in favor of the free subunits, thus enhancing the availability of 30S subunits on which protein synthesis initiation begins. This is Translation initiation factor IF-3 from Ehrlichia ruminantium (strain Gardel).